A 181-amino-acid chain; its full sequence is c-Myc-binding protein homolog (181 aa).

Over residues 111 to 127 (ESTEAAEQQQQQQQQEN) the composition is skewed to low complexity. Disordered stretches follow at residues 111 to 145 (ESTEAAEQQQQQQQQENGETELEKPNESSADVAEI) and 159 to 181 (VVTTDEAAQPSPTVQAEASGSSE). Residues 168-181 (PSPTVQAEASGSSE) are compositionally biased toward polar residues.

It belongs to the AMY1 family.

Its subcellular location is the nucleus. The polypeptide is c-Myc-binding protein homolog (Drosophila melanogaster (Fruit fly)).